Consider the following 340-residue polypeptide: MNLNSPAVSMLGGDTPAHGGPNSVLGGQGPSSILTGHGPNSVMGPNSILGPGSVLNPQSIQPMQSQQMHSLQGSSMQMHSHLANSNLNLNINPASVGPDRNPGSVMHHNLDINPPSVAYQNLTVPMTPLAYSVYDRDALTHQAPASNIAATMVPATPASQLDIPMPALQNIVSTVNLGVQLDLKKIALHARNAEYNPKRFAAVIMRIREPRTTALIFSSGKMVCTGAKSEEASRLAARKYARIVQKLGFQAKFTEFMVQNMVGSCDVRFPIQLEGLCITHSQFSTYEPELFPGLIYRMVKPRVVLLIFVSGKVVITGAKTKRDIDEAFGQIYPILKGFKK.

The tract at residues 1 to 78 (MNLNSPAVSM…HSLQGSSMQM (78 aa)) is disordered. A compositionally biased stretch (low complexity) spans 57-68 (PQSIQPMQSQQM). The segment covering 69-78 (HSLQGSSMQM) has biased composition (polar residues). 2 repeat units span residues 168–244 (LQNI…ARIV) and 258–335 (VQNM…YPIL).

This sequence belongs to the TBP family. Component of the TFIID basal transcription factor complex, composed of TATA-box-binding protein tbp-1, and a number of TBP-associated factors (TAFs). Binds DNA as monomer.

Its subcellular location is the nucleus. The TFIID basal transcription factor complex plays a major role in the initiation of RNA polymerase II (Pol II)-dependent transcription. TFIID recognizes and binds promoters via its subunit tbp-1, a TATA-box-binding protein, and promotes assembly of the pre-initiation complex (PIC). The TFIID complex consists of tbp-1 and TBP-associated factors (TAFs). General transcription factor that functions at the core of the TFIID complex. This Caenorhabditis elegans protein is TATA-box-binding protein (tbp-1).